A 343-amino-acid chain; its full sequence is General transcription and DNA repair factor IIH subunit TFB6 (343 aa).

Position 69 is a phosphotyrosine (tyrosine 69). 2 positions are modified to phosphothreonine: threonine 71 and threonine 84. 4 positions are modified to phosphoserine: serine 104, serine 105, serine 108, and serine 342.

As to quaternary structure, component of the general transcription factor TFIIH, composed of a 7-subunit TFIIH core complex composed of XPB/SSL2, XPD/RAD3, SSL1, TFB1, TFB2, TFB4 and TFB5 which is active in NER; the 3-subunit CTD-kinase module TFIIK composed of CCL1, KIN28, and TFB3 which is active in transcription; as well as TFB6 that regulates SSL2 association with the complex. Phosphorylation leads the dissociation of from SSL2.

The protein localises to the cytoplasm. The protein resides in the nucleus. Its function is as follows. Component of the general transcription and DNA repair factor IIH (TFIIH) core complex, which is involved in general and transcription-coupled nucleotide excision repair (NER) of damaged DNA and, when complexed to TFIIK, in RNA transcription by RNA polymerase II. In NER, TFIIH acts by opening DNA around the lesion to allow the excision of the damaged oligonucleotide and its replacement by a new DNA fragment. In transcription, TFIIH has an essential role in transcription initiation. When the pre-initiation complex (PIC) has been established, TFIIH is required for promoter opening and promoter escape. Phosphorylation of the C-terminal tail (CTD) of the largest subunit of RNA polymerase II by the kinase module TFIIK controls the initiation of transcription. TFB6 facilitates dissociation of the SSL2 helicase from TFIIH after transcription initiation. This chain is General transcription and DNA repair factor IIH subunit TFB6, found in Saccharomyces cerevisiae (strain ATCC 204508 / S288c) (Baker's yeast).